Consider the following 128-residue polypeptide: uncharacterized protein (128 aa).

This is an uncharacterized protein from Schizosaccharomyces pombe (strain 972 / ATCC 24843) (Fission yeast).